The following is a 573-amino-acid chain: Probable CoA ligase CCL13 (573 aa).

Residues 216-224 (TSGTTARPK), 352-357 (HIYGLT), aspartate 449, 461-464 (LKDR), and lysine 556 contribute to the ATP site. The tract at residues 284–352 (SPKAIFDNIH…MEEMGFQVNH (69 aa)) is SBD1. The segment at 353 to 429 (IYGLTETHGP…FRGNTVMSGY (77 aa)) is SBD2.

The protein belongs to the ATP-dependent AMP-binding enzyme family.

It localises to the cytoplasm. It is found in the cytosol. The protein is Probable CoA ligase CCL13 of Humulus lupulus (European hop).